Reading from the N-terminus, the 198-residue chain is Na(+)-translocating NADH-quinone reductase subunit E (198 aa).

The next 6 helical transmembrane spans lie at 11–31, 35–55, 77–97, 110–130, 140–160, and 176–196; these read SVFI…FLAV, VSTA…SVPV, FLNF…LEMI, GIFL…SFMV, VVYG…LAGI, and LGIT…FSGV.

This sequence belongs to the NqrDE/RnfAE family. Composed of six subunits; NqrA, NqrB, NqrC, NqrD, NqrE and NqrF.

It is found in the cell inner membrane. It carries out the reaction a ubiquinone + n Na(+)(in) + NADH + H(+) = a ubiquinol + n Na(+)(out) + NAD(+). In terms of biological role, NQR complex catalyzes the reduction of ubiquinone-1 to ubiquinol by two successive reactions, coupled with the transport of Na(+) ions from the cytoplasm to the periplasm. NqrA to NqrE are probably involved in the second step, the conversion of ubisemiquinone to ubiquinol. This is Na(+)-translocating NADH-quinone reductase subunit E from Histophilus somni (strain 129Pt) (Haemophilus somnus).